A 1174-amino-acid chain; its full sequence is Protein kinase C-like (1174 aa).

Residues 1–68 (MANVEETVAN…LRDLDLQRTT (68 aa)) enclose the REM-1 1 domain. Over residues 69-84 (SGVDNMSLQPGRSPTN) the composition is skewed to polar residues. Positions 69–140 (SGVDNMSLQP…PPPATANKRP (72 aa)) are disordered. The span at 96–123 (GYAQQDQGGYGGPQSQYSQLSGGEALQP) shows a compositional bias: low complexity. The span at 124-134 (PRAPFAAPPPA) shows a compositional bias: pro residues. In terms of domain architecture, REM-1 2 spans 149–226 (KYDTPHLGPR…LKRYEDLHVD (78 aa)). The 121-residue stretch at 229–349 (GDGDDNDSLD…MRRKKLETEL (121 aa)) folds into the C2 domain. The interval 358 to 406 (DKMGGHTGIQPDMQFQPPPGQSPAGGPGGGPTPAGVRPPGAPQPQTGPI) is disordered. The segment covering 380–389 (PAGGPGGGPT) has biased composition (gly residues). 2 Phorbol-ester/DAG-type zinc fingers span residues 458-506 (GHKF…VTKC) and 526-576 (PHRF…PDFC). The segment at 593 to 842 (TRRGQSSSGP…PAANTQGTGK (250 aa)) is disordered. The segment covering 596–611 (GQSSSGPGMSQRTLRP) has biased composition (polar residues). A compositionally biased stretch (low complexity) spans 624-636 (QSPGQPGQESPTQ). Pro residues predominate over residues 648–657 (SPPPGPPRQP). Positions 658–709 (SYPSSATSVDAARASYSTTGTASTGAPTSPTSGSRPPSGPRTQSSVAAAAAA) are enriched in low complexity. Over residues 720–744 (RSNTDYSPQSGRSSGSGYPTEQRMS) the composition is skewed to polar residues. The segment covering 786-802 (LPQPPPPQSPPQHPQQP) has biased composition (pro residues). The segment covering 808–820 (KMPEQQALTQQPP) has biased composition (polar residues). Residues 849–1108 (FNFLAVLGKG…AQEIMSHAFF (260 aa)) enclose the Protein kinase domain. Residues 855–863 (LGKGNFGKV) and Lys878 each bind ATP. Asp974 (proton acceptor) is an active-site residue. An AGC-kinase C-terminal domain is found at 1109–1174 (RNINWDDIYH…RGFSYSADFA (66 aa)).

This sequence belongs to the protein kinase superfamily. AGC Ser/Thr protein kinase family. PKC subfamily.

The catalysed reaction is L-seryl-[protein] + ATP = O-phospho-L-seryl-[protein] + ADP + H(+). It catalyses the reaction L-threonyl-[protein] + ATP = O-phospho-L-threonyl-[protein] + ADP + H(+). In Cochliobolus heterostrophus (Southern corn leaf blight fungus), this protein is Protein kinase C-like (PKC1).